Here is a 273-residue protein sequence, read N- to C-terminus: UPF0380 protein YafZ (273 aa).

It belongs to the UPF0380 family.

The protein is UPF0380 protein YafZ (yafZ) of Escherichia coli (strain K12).